A 224-amino-acid polypeptide reads, in one-letter code: MASSRSVVLRVLVAVAVVAAAGAPRLAVADSPPLQDICVADLRAATAVDGFPCKPTASVVSDDFFCDAIVQAPSTSNPFGVNSTRATVSAFPGLNTLGLSITRTDLAPGGLNPPHSHPRASELVLVLSGEVMVGFTTAANRLFSKVVREKELFVVPRGLQHFQLNVGAGNASFVAMFDSQSPGLVTPTFALFATQPAMPMEVLAKTFLMGEDEVGAIKSKFAGF.

Positions methionine 1–alanine 29 are cleaved as a signal peptide. A disulfide bond links cysteine 38 and cysteine 53. Positions aspartate 67–glycine 215 constitute a Cupin type-1 domain. N-linked (GlcNAc...) asparagine glycosylation occurs at asparagine 82. Mn(2+) contacts are provided by histidine 115, histidine 117, glutamate 122, and histidine 161. Asparagine 170 carries N-linked (GlcNAc...) asparagine glycosylation.

It belongs to the germin family. In terms of assembly, oligomer (believed to be a pentamer but probably hexamer).

It is found in the secreted. It localises to the extracellular space. The protein resides in the apoplast. May play a role in plant defense. Probably has no oxalate oxidase activity even if the active site is conserved. The protein is Germin-like protein 1-2 of Oryza sativa subsp. japonica (Rice).